Consider the following 171-residue polypeptide: Transcription antitermination protein NusB (171 aa).

The protein belongs to the NusB family.

Involved in transcription antitermination. Required for transcription of ribosomal RNA (rRNA) genes. Binds specifically to the boxA antiterminator sequence of the ribosomal RNA (rrn) operons. The polypeptide is Transcription antitermination protein NusB (Brucella ovis (strain ATCC 25840 / 63/290 / NCTC 10512)).